Consider the following 102-residue polypeptide: MVWHYTNDVALYCRAFRSMPHCLRERQYFMVKDHDLLLKLTGELVSVNINRYKCGYCGACVGVCPKGALELVETWIEVDESTCIKCGICDRICPVGAIEVMK.

2 4Fe-4S ferredoxin-type domains span residues 45-73 and 74-102; these read VSVN…ELVE and TWIE…EVMK. Positions 54, 57, 60, 64, 83, 86, 89, and 93 each coordinate [4Fe-4S] cluster.

[4Fe-4S] cluster serves as cofactor.

The protein operates within membrane lipid metabolism; glycerophospholipid metabolism. Its function is as follows. Ferredoxin that is the specific electron donor for the geranylgeranyl reductase GGR involved in the biosynthesis of archaeal membrane lipids. The sequence is that of Ferredoxin from Methanosarcina acetivorans (strain ATCC 35395 / DSM 2834 / JCM 12185 / C2A).